Here is an 88-residue protein sequence, read N- to C-terminus: Small ribosomal subunit protein uS17 (88 aa).

This sequence belongs to the universal ribosomal protein uS17 family. Part of the 30S ribosomal subunit.

One of the primary rRNA binding proteins, it binds specifically to the 5'-end of 16S ribosomal RNA. In Yersinia pseudotuberculosis serotype O:1b (strain IP 31758), this protein is Small ribosomal subunit protein uS17.